The primary structure comprises 308 residues: Tryptophan 2,3-dioxygenase (308 aa).

The segment at 1–37 (MKPPGDNAPAGCPFSGARAAQPAHEAPHVPGDAAGET) is disordered. Residues 77–81 (FIIQH), Y139, and R143 contribute to the substrate site. H266 provides a ligand contact to heme. Residue T280 participates in substrate binding.

This sequence belongs to the tryptophan 2,3-dioxygenase family. Homotetramer. It depends on heme as a cofactor.

It catalyses the reaction L-tryptophan + O2 = N-formyl-L-kynurenine. Its pathway is amino-acid degradation; L-tryptophan degradation via kynurenine pathway; L-kynurenine from L-tryptophan: step 1/2. In terms of biological role, heme-dependent dioxygenase that catalyzes the oxidative cleavage of the L-tryptophan (L-Trp) pyrrole ring and converts L-tryptophan to N-formyl-L-kynurenine. Catalyzes the oxidative cleavage of the indole moiety. This chain is Tryptophan 2,3-dioxygenase, found in Burkholderia ambifaria (strain MC40-6).